A 121-amino-acid polypeptide reads, in one-letter code: Ribosome-binding factor A (121 aa).

It belongs to the RbfA family. In terms of assembly, monomer. Binds 30S ribosomal subunits, but not 50S ribosomal subunits or 70S ribosomes.

Its subcellular location is the cytoplasm. Functionally, one of several proteins that assist in the late maturation steps of the functional core of the 30S ribosomal subunit. Associates with free 30S ribosomal subunits (but not with 30S subunits that are part of 70S ribosomes or polysomes). Required for efficient processing of 16S rRNA. May interact with the 5'-terminal helix region of 16S rRNA. The chain is Ribosome-binding factor A from Paraburkholderia xenovorans (strain LB400).